The following is a 446-amino-acid chain: High mobility group B protein 13 (446 aa).

Disordered stretches follow at residues 1–43 (MSTV…TKSF) and 110–130 (LAQT…AETK). A compositionally biased stretch (basic residues) spans 11–22 (AKKSRNSRKALK). 2 DNA-binding regions (HMG box) span residues 129–197 (TKRP…TKEK) and 246–312 (PKQP…EGYK). Residues 349-371 (NIIKKTKETAKNKKKNENVDPNK) are compositionally biased toward basic and acidic residues. The segment at 349–377 (NIIKKTKETAKNKKKNENVDPNKPKKPTS) is disordered. The segment at residues 372-440 (PKKPTSSYFL…AYKKEVEEYN (69 aa)) is a DNA-binding region (HMG box 3).

It belongs to the HMGB family.

Its subcellular location is the nucleus. The protein is High mobility group B protein 13 (HMGB13) of Arabidopsis thaliana (Mouse-ear cress).